A 291-amino-acid polypeptide reads, in one-letter code: Protease HtpX homolog (291 aa).

2 helical membrane passes run 11–31 and 34–54; these read INTF…GLLA and FLGM…ACVQ. Histidine 140 provides a ligand contact to Zn(2+). The active site involves glutamate 141. A Zn(2+)-binding site is contributed by histidine 144. Helical transmembrane passes span 155–175 and 186–206; these read IVFG…RALI and AFSF…AMLV. Glutamate 215 is a Zn(2+) binding site.

It belongs to the peptidase M48B family. Zn(2+) is required as a cofactor.

It is found in the cell membrane. This chain is Protease HtpX homolog, found in Tropheryma whipplei (strain Twist) (Whipple's bacillus).